The chain runs to 267 residues: 3-methyl-2-oxobutanoate hydroxymethyltransferase (267 aa).

2 residues coordinate Mg(2+): Asp-45 and Asp-84. Residues 45-46 (DS), Asp-84, and Lys-113 contribute to the 3-methyl-2-oxobutanoate site. Glu-115 is a binding site for Mg(2+). The active-site Proton acceptor is Glu-182.

This sequence belongs to the PanB family. As to quaternary structure, homodecamer; pentamer of dimers. Mg(2+) is required as a cofactor.

The protein resides in the cytoplasm. It carries out the reaction 3-methyl-2-oxobutanoate + (6R)-5,10-methylene-5,6,7,8-tetrahydrofolate + H2O = 2-dehydropantoate + (6S)-5,6,7,8-tetrahydrofolate. It participates in cofactor biosynthesis; coenzyme A biosynthesis. In terms of biological role, catalyzes the reversible reaction in which hydroxymethyl group from 5,10-methylenetetrahydrofolate is transferred onto alpha-ketoisovalerate to form ketopantoate. The polypeptide is 3-methyl-2-oxobutanoate hydroxymethyltransferase (Saccharolobus islandicus (strain M.16.27) (Sulfolobus islandicus)).